A 304-amino-acid chain; its full sequence is E3 ubiquitin-protein ligase CCNB1IP1 homolog (304 aa).

Residues 3-42 form an RING-type; degenerate zinc finger; sequence CNACWRDLEGRAISTTCGHLLCTEDASKILSNDGACPICD. Residues 124-184 adopt a coiled-coil conformation; the sequence is TAYQKMGKRC…YESVKRTAIQ (61 aa). Residues 218-279 are disordered; the sequence is SFFSPATPGP…GGGGTANPQS (62 aa). Polar residues predominate over residues 235-250; sequence RQNSSNSGPFDISTDS.

Expressed mostly in flower buds and roots.

It is found in the nucleus. The protein localises to the chromosome. The enzyme catalyses S-ubiquitinyl-[E2 ubiquitin-conjugating enzyme]-L-cysteine + [acceptor protein]-L-lysine = [E2 ubiquitin-conjugating enzyme]-L-cysteine + N(6)-ubiquitinyl-[acceptor protein]-L-lysine.. It participates in protein modification; protein ubiquitination. In terms of biological role, ubiquitin E3 ligase required for class I crossover (CO) formation during meiosis. The protein is E3 ubiquitin-protein ligase CCNB1IP1 homolog (HEI10) of Arabidopsis thaliana (Mouse-ear cress).